Consider the following 359-residue polypeptide: Probable isoaspartyl peptidase/L-asparaginase 3 (359 aa).

Thr224 serves as the catalytic Nucleophile. Substrate is bound by residues Arg252–Asp255 and Thr275–Gly278.

This sequence belongs to the Ntn-hydrolase family. Heterotetramer of two alpha and two beta chains arranged as a dimer of alpha/beta heterodimers. In terms of processing, cleaved into an alpha and beta chain by autocatalysis; this activates the enzyme. The N-terminal residue of the beta subunit is responsible for the nucleophile hydrolase activity.

It catalyses the reaction Cleavage of a beta-linked Asp residue from the N-terminus of a polypeptide.. Functionally, acts in asparagine catabolism but also in the final steps of protein degradation via hydrolysis of a range of isoaspartyl dipeptides. This is Probable isoaspartyl peptidase/L-asparaginase 3 from Arabidopsis thaliana (Mouse-ear cress).